Here is a 27-residue protein sequence, read N- to C-terminus: Chitinase 47 kDa (27 aa).

Residues Ser-3–Ser-27 enclose the GH18 domain.

The protein belongs to the glycosyl hydrolase 18 family. Chitinase class II subfamily. As to quaternary structure, homodimer.

It catalyses the reaction Random endo-hydrolysis of N-acetyl-beta-D-glucosaminide (1-&gt;4)-beta-linkages in chitin and chitodextrins.. Able to cleave chitin oligomers from N=3 to 6. This Streptomyces olivaceoviridis (Streptomyces corchorusii) protein is Chitinase 47 kDa.